We begin with the raw amino-acid sequence, 496 residues long: ATP-dependent protease ATPase subunit HslU2 (496 aa).

A mitochondrion-targeting transit peptide spans 1 to 10; it reads MIRFSWVRLC. Residues valine 51 and 94–99 each bind ATP; that span reads GVGKTE. A compositionally biased stretch (low complexity) spans 177-191; sequence GSFGSSTRNSGSGDS. Positions 177–204 are disordered; it reads GSFGSSTRNSGSGDSSAEEDKNSSSRDN. ATP-binding residues include aspartate 308, glutamate 374, and arginine 446.

The protein belongs to the ClpX chaperone family. HslU subfamily. A double ring-shaped homohexamer of HslV is capped on each side by a ring-shaped HslU homohexamer. The assembly of the HslU/HslV complex (HslVU) is dependent on binding of ATP.

It localises to the mitochondrion matrix. Its subcellular location is the kinetoplast. Functionally, ATPase subunit of a proteasome-like degradation complex; this subunit has chaperone activity. The binding of ATP and its subsequent hydrolysis by HslU are essential for unfolding of protein substrates subsequently hydrolyzed by HslV. HslU recognizes the N-terminal part of its protein substrates and unfolds these before they are guided to HslV for hydrolysis. The HslVU protease complex functions in mitochondrial DNA replication by regulating DNA helicase PIF2 protein levels. This chain is ATP-dependent protease ATPase subunit HslU2 (HslU2), found in Trypanosoma brucei brucei (strain 927/4 GUTat10.1).